We begin with the raw amino-acid sequence, 409 residues long: Elongation factor Tu (409 aa).

The region spanning 10–214 (KPHVNVGTIG…AVDNYIPTPE (205 aa)) is the tr-type G domain. The interval 19-26 (GHVDHGKT) is G1. 19–26 (GHVDHGKT) provides a ligand contact to GTP. Residue Thr-26 participates in Mg(2+) binding. Residues 60–64 (GITIN) are G2. The tract at residues 81-84 (DCPG) is G3. GTP-binding positions include 81 to 85 (DCPGH) and 136 to 139 (NKVD). Residues 136–139 (NKVD) form a G4 region. The segment at 174–176 (SGL) is G5.

The protein belongs to the TRAFAC class translation factor GTPase superfamily. Classic translation factor GTPase family. EF-Tu/EF-1A subfamily. As to quaternary structure, monomer.

It is found in the cytoplasm. The catalysed reaction is GTP + H2O = GDP + phosphate + H(+). Functionally, GTP hydrolase that promotes the GTP-dependent binding of aminoacyl-tRNA to the A-site of ribosomes during protein biosynthesis. This Thermosynechococcus vestitus (strain NIES-2133 / IAM M-273 / BP-1) protein is Elongation factor Tu.